The following is a 232-amino-acid chain: Imidazoleglycerol-phosphate dehydratase (232 aa).

This sequence belongs to the imidazoleglycerol-phosphate dehydratase family.

It catalyses the reaction D-erythro-1-(imidazol-4-yl)glycerol 3-phosphate = 3-(imidazol-4-yl)-2-oxopropyl phosphate + H2O. The protein operates within amino-acid biosynthesis; L-histidine biosynthesis; L-histidine from 5-phospho-alpha-D-ribose 1-diphosphate: step 6/9. The polypeptide is Imidazoleglycerol-phosphate dehydratase (HIS3) (Lachancea kluyveri (strain ATCC 58438 / CBS 3082 / BCRC 21498 / NBRC 1685 / JCM 7257 / NCYC 543 / NRRL Y-12651) (Yeast)).